Reading from the N-terminus, the 226-residue chain is Phosphoenolpyruvate guanylyltransferase (226 aa).

Phosphoenolpyruvate is bound by residues Thr145, Gly161, and Ser164.

It belongs to the CofC family.

The catalysed reaction is phosphoenolpyruvate + GTP + H(+) = enolpyruvoyl-2-diphospho-5'-guanosine + diphosphate. Its pathway is cofactor biosynthesis; coenzyme F420 biosynthesis. Guanylyltransferase that catalyzes the activation of phosphoenolpyruvate (PEP) as enolpyruvoyl-2-diphospho-5'-guanosine, via the condensation of PEP with GTP. It is involved in the biosynthesis of coenzyme F420, a hydride carrier cofactor. This chain is Phosphoenolpyruvate guanylyltransferase, found in Nocardia farcinica (strain IFM 10152).